A 367-amino-acid chain; its full sequence is DNA replication and repair protein RecF (367 aa).

30 to 37 is a binding site for ATP; it reads GNNAQGKT.

It belongs to the RecF family.

It localises to the cytoplasm. In terms of biological role, the RecF protein is involved in DNA metabolism; it is required for DNA replication and normal SOS inducibility. RecF binds preferentially to single-stranded, linear DNA. It also seems to bind ATP. The sequence is that of DNA replication and repair protein RecF from Clostridium tetani (strain Massachusetts / E88).